The sequence spans 182 residues: Adenylate kinase (182 aa).

12–17 (GAGKGT) is a binding site for ATP. The segment at 32–61 (STGDLLRDEVSSGSVLGIKAAEIMNKGELV) is NMP. AMP-binding positions include Thr33, Arg38, 59-61 (ELV), 85-88 (GFPR), and Gln92. The LID stretch occupies residues 126–132 (ERGRQDD). ATP is bound at residue Arg127. AMP is bound by residues Arg129 and Arg140. Ala168 provides a ligand contact to ATP.

This sequence belongs to the adenylate kinase family. In terms of assembly, monomer.

It is found in the cytoplasm. It catalyses the reaction AMP + ATP = 2 ADP. It participates in purine metabolism; AMP biosynthesis via salvage pathway; AMP from ADP: step 1/1. Its function is as follows. Catalyzes the reversible transfer of the terminal phosphate group between ATP and AMP. Plays an important role in cellular energy homeostasis and in adenine nucleotide metabolism. This chain is Adenylate kinase, found in Prochlorococcus marinus (strain NATL1A).